A 649-amino-acid polypeptide reads, in one-letter code: ENTH domain-containing protein C19F8.03c (649 aa).

One can recognise an ENTH domain in the interval S2–P136. Disordered stretches follow at residues Y280–E382, L409–S440, and F590–S649. Phosphoserine occurs at positions 285 and 287. Residues P299 to P308 are compositionally biased toward basic residues. Composition is skewed to polar residues over residues E313 to Q326 and P340 to I349. A compositionally biased stretch (acidic residues) spans Q352–L381. 3 stretches are compositionally biased toward polar residues: residues L409–P418, T614–S624, and A635–S649. T414 carries the post-translational modification Phosphothreonine. At S417 the chain carries Phosphoserine.

The protein resides in the cytoplasm. The protein is ENTH domain-containing protein C19F8.03c of Schizosaccharomyces pombe (strain 972 / ATCC 24843) (Fission yeast).